Here is a 429-residue protein sequence, read N- to C-terminus: Small ribosomal subunit protein mS47 (429 aa).

Residues glutamate 141, glycine 166, glutamate 189, and aspartate 197 each contribute to the substrate site.

It belongs to the enoyl-CoA hydratase/isomerase family. Mitochondrion-specific ribosomal protein mS47 subfamily. Component of the mitochondrial small ribosomal subunit (mt-SSU). Mature yeast 74S mitochondrial ribosomes consist of a small (37S) and a large (54S) subunit. The 37S small subunit contains a 15S ribosomal RNA (15S mt-rRNA) and at least 32 different proteins. The 54S large subunit contains a 21S rRNA (21S mt-rRNA) and at least 45 different proteins. mS47/snr1 forms a protuberance of the yeast mitoribosome and retains a solvent-exposed cavity likely capable of accommodating a substrate, in accordance with it being an active enzyme as well as an integral constituent of the mitoribosome.

The protein localises to the mitochondrion. The enzyme catalyses 3-hydroxy-2-methylpropanoyl-CoA + H2O = 3-hydroxy-2-methylpropanoate + CoA + H(+). Its pathway is amino-acid degradation; L-valine degradation. Component of the mitochondrial ribosome (mitoribosome), a dedicated translation machinery responsible for the synthesis of mitochondrial genome-encoded proteins, including at least some of the essential transmembrane subunits of the mitochondrial respiratory chain. The mitoribosomes are attached to the mitochondrial inner membrane and translation products are cotranslationally integrated into the membrane. mS47/snr1 has enzymatic activity in vitro, and is able to catalyze the specific hydrolysis of 3-hydroxyisobutyryl-CoA (HIBYL-CoA). However, because the turnover rate of mS47/snr1 is only a fraction of that of the homologous mammalian enzyme, the physiological function of this activity remains unclear. Has an indirect role in endocytic membrane trafficking. This is Small ribosomal subunit protein mS47 (snr1) from Schizosaccharomyces pombe (strain 972 / ATCC 24843) (Fission yeast).